The sequence spans 166 residues: Lipoprotein signal peptidase (166 aa).

Helical transmembrane passes span 10-30 (GGAL…DQLT), 46-66 (LTPF…GFLA), 71-91 (WQRW…CYLL), and 100-120 (FSLS…DRLI). Active-site residues include aspartate 126 and aspartate 144. Residues 135–155 (WHWPAFNLADSAITVGAVLLI) traverse the membrane as a helical segment.

This sequence belongs to the peptidase A8 family.

The protein resides in the cell inner membrane. It carries out the reaction Release of signal peptides from bacterial membrane prolipoproteins. Hydrolyzes -Xaa-Yaa-Zaa-|-(S,diacylglyceryl)Cys-, in which Xaa is hydrophobic (preferably Leu), and Yaa (Ala or Ser) and Zaa (Gly or Ala) have small, neutral side chains.. Its pathway is protein modification; lipoprotein biosynthesis (signal peptide cleavage). This protein specifically catalyzes the removal of signal peptides from prolipoproteins. This is Lipoprotein signal peptidase from Burkholderia thailandensis (strain ATCC 700388 / DSM 13276 / CCUG 48851 / CIP 106301 / E264).